A 374-amino-acid polypeptide reads, in one-letter code: Probable plastid-lipid-associated protein 3, chloroplastic (374 aa).

The transit peptide at 1 to 46 (MAMPPPLFAAASHASLLLPSPTIHSSTGSRRPFRLPLRSSRRPPVA) directs the protein to the chloroplast. A disordered region spans residues 19-148 (PSPTIHSSTG…EDNEEERREE (130 aa)). The span at 28-54 (GSRRPFRLPLRSSRRPPVAAAAASGVP) shows a compositional bias: low complexity. Composition is skewed to pro residues over residues 64–73 (APEPPSQPDP) and 127–136 (PAPPPPPPPV).

It belongs to the PAP/fibrillin family.

The protein resides in the plastid. The protein localises to the chloroplast. The protein is Probable plastid-lipid-associated protein 3, chloroplastic (PAP3) of Oryza sativa subsp. japonica (Rice).